We begin with the raw amino-acid sequence, 124 residues long: UPF0102 protein Mmc1_3298 (124 aa).

This sequence belongs to the UPF0102 family.

The protein is UPF0102 protein Mmc1_3298 of Magnetococcus marinus (strain ATCC BAA-1437 / JCM 17883 / MC-1).